We begin with the raw amino-acid sequence, 229 residues long: ATP synthase subunit a (229 aa).

6 consecutive transmembrane segments (helical) span residues 14 to 34 (LIAITNSSMMMMLAVAVALIL), 68 to 88 (YFPFVFTLFIFIVFLNILGLF), 98 to 118 (IVVTLGLSFSIVIGVTLGGLW), 124 to 144 (FLSILMPAGAPLALAPLLVLI), 157 to 179 (GVRLAANLSAGHLLFAILAGFGF), and 189 to 209 (NIFPVLIMVFISLLEAAVAVI).

Belongs to the ATPase A chain family. F-type ATPases have 2 components, CF(1) - the catalytic core - and CF(0) - the membrane proton channel. CF(1) has five subunits: alpha(3), beta(3), gamma(1), delta(1), epsilon(1). CF(0) has three main subunits: a, b and c.

It is found in the mitochondrion inner membrane. Mitochondrial membrane ATP synthase (F(1)F(0) ATP synthase or Complex V) produces ATP from ADP in the presence of a proton gradient across the membrane which is generated by electron transport complexes of the respiratory chain. F-type ATPases consist of two structural domains, F(1) - containing the extramembraneous catalytic core and F(0) - containing the membrane proton channel, linked together by a central stalk and a peripheral stalk. During catalysis, ATP synthesis in the catalytic domain of F(1) is coupled via a rotary mechanism of the central stalk subunits to proton translocation. Key component of the proton channel; it may play a direct role in the translocation of protons across the membrane. This Metridium senile (Brown sea anemone) protein is ATP synthase subunit a (ATPASE6).